The primary structure comprises 494 residues: MLMNWDERRVKIVEELRKNGIEPYPHKYEVTHLIKDIKLIAKSQGNKSHEPFMFNISTAGRVANIRRHGKASFVDIFDEGEKLQLYMRVDELKEKYDKFFIYVGRGDIIGVKGDLFYTMKGELSLLVKDYQLLSKALIEPPDWSKLSPEFRYAHRYVDFLYNDNARKAMEIRYTIIREIREFLYSKGFIEVETPIVQPVYGGALAKPFKTHVNYLNEDWYLRIALELYLKRYIIGGFNKVFEIGKVFRNEDIDVTHNPEFTLLELYWAYADYNDIMNLTEDLLKSVVKKVTNSTKIVYGKYEIDFEGPFKRISMYDSLSEILGKDVESMSDNELKELMKKYNLTPRGNQYVRGLMIEKLFDKLVTPTLTNPTFITDYPIETTPLCKPHRNKPGLVERFEMFIAGMEVANAYTELNDPILQDKLFREEQEMFRRGDEEAHPYDKDFVRALSYGMPPTGGLGIGIDRIVMLVTNNYSIKEVIPFPMISSKVILEDD.

The Mg(2+) site is built by glutamate 399 and glutamate 406.

The protein belongs to the class-II aminoacyl-tRNA synthetase family. Mg(2+) is required as a cofactor.

The protein localises to the cytoplasm. The enzyme catalyses tRNA(Lys) + L-lysine + ATP = L-lysyl-tRNA(Lys) + AMP + diphosphate. This Saccharolobus solfataricus (strain ATCC 35092 / DSM 1617 / JCM 11322 / P2) (Sulfolobus solfataricus) protein is Lysine--tRNA ligase (lysS).